Here is a 336-residue protein sequence, read N- to C-terminus: F420-dependent glucose-6-phosphate dehydrogenase (336 aa).

Asp39 contributes to the coenzyme F420-(gamma-Glu)n binding site. His40 acts as the Proton donor in catalysis. Residues Thr76 and 107-108 (SG) contribute to the coenzyme F420-(gamma-Glu)n site. Catalysis depends on Glu109, which acts as the Proton acceptor. Coenzyme F420-(gamma-Glu)n contacts are provided by residues Asn112, 177 to 178 (GG), and 180 to 181 (VV). 4 residues coordinate substrate: Thr195, Lys198, Lys259, and Arg283.

The protein belongs to the F420-dependent glucose-6-phosphate dehydrogenase family. As to quaternary structure, homodimer.

The enzyme catalyses oxidized coenzyme F420-(gamma-L-Glu)(n) + D-glucose 6-phosphate + H(+) = 6-phospho-D-glucono-1,5-lactone + reduced coenzyme F420-(gamma-L-Glu)(n). Functionally, catalyzes the coenzyme F420-dependent oxidation of glucose 6-phosphate (G6P) to 6-phosphogluconolactone. In Tsukamurella paurometabola (strain ATCC 8368 / DSM 20162 / CCUG 35730 / CIP 100753 / JCM 10117 / KCTC 9821 / NBRC 16120 / NCIMB 702349 / NCTC 13040) (Corynebacterium paurometabolum), this protein is F420-dependent glucose-6-phosphate dehydrogenase.